Here is a 115-residue protein sequence, read N- to C-terminus: Ribonuclease P protein component (115 aa).

Belongs to the RnpA family. As to quaternary structure, consists of a catalytic RNA component (M1 or rnpB) and a protein subunit.

The enzyme catalyses Endonucleolytic cleavage of RNA, removing 5'-extranucleotides from tRNA precursor.. RNaseP catalyzes the removal of the 5'-leader sequence from pre-tRNA to produce the mature 5'-terminus. It can also cleave other RNA substrates such as 4.5S RNA. The protein component plays an auxiliary but essential role in vivo by binding to the 5'-leader sequence and broadening the substrate specificity of the ribozyme. This chain is Ribonuclease P protein component, found in Staphylococcus aureus (strain Mu3 / ATCC 700698).